The sequence spans 106 residues: MSKLHIKKGDTVYVNAGEDKGKTGRVLKVLVKEGRAIVEGINMVSKSTKPNAKNPQGGIVKQEAPIHISNLNPVDPKTGKATRVGRKVSSEGTLVRYSKKSGEEIK.

The segment at 69–106 (SNLNPVDPKTGKATRVGRKVSSEGTLVRYSKKSGEEIK) is disordered.

The protein belongs to the universal ribosomal protein uL24 family. In terms of assembly, part of the 50S ribosomal subunit.

In terms of biological role, one of two assembly initiator proteins, it binds directly to the 5'-end of the 23S rRNA, where it nucleates assembly of the 50S subunit. Its function is as follows. One of the proteins that surrounds the polypeptide exit tunnel on the outside of the subunit. This chain is Large ribosomal subunit protein uL24, found in Bacteroides fragilis (strain ATCC 25285 / DSM 2151 / CCUG 4856 / JCM 11019 / LMG 10263 / NCTC 9343 / Onslow / VPI 2553 / EN-2).